Reading from the N-terminus, the 551-residue chain is ATP synthase subunit alpha, mitochondrial (551 aa).

210–217 (GDRQTGKT) lines the ATP pocket.

This sequence belongs to the ATPase alpha/beta chains family. As to quaternary structure, F-type ATPases have 2 components, CF(1) - the catalytic core - and CF(0) - the membrane proton channel. CF(1) has five subunits: alpha(3), beta(3), gamma(1), delta(1), epsilon(1). CF(0) has three main subunits: a, b and c.

The protein resides in the mitochondrion. It localises to the mitochondrion inner membrane. Functionally, mitochondrial membrane ATP synthase (F(1)F(0) ATP synthase or Complex V) produces ATP from ADP in the presence of a proton gradient across the membrane which is generated by electron transport complexes of the respiratory chain. F-type ATPases consist of two structural domains, F(1) - containing the extramembraneous catalytic core, and F(0) - containing the membrane proton channel, linked together by a central stalk and a peripheral stalk. During catalysis, ATP synthesis in the catalytic domain of F(1) is coupled via a rotary mechanism of the central stalk subunits to proton translocation. Subunits alpha and beta form the catalytic core in F(1). Rotation of the central stalk against the surrounding alpha(3)beta(3) subunits leads to hydrolysis of ATP in three separate catalytic sites on the beta subunits. Subunit alpha does not bear the catalytic high-affinity ATP-binding sites. The protein is ATP synthase subunit alpha, mitochondrial (atp-1) of Neurospora crassa (strain ATCC 24698 / 74-OR23-1A / CBS 708.71 / DSM 1257 / FGSC 987).